The chain runs to 279 residues: Secreted RxLR effector protein 90 (279 aa).

An N-terminal signal peptide occupies residues 1–19; the sequence is MKSAAAFATFLTLSVFVAT. Positions 29–46 match the RxLR-dEER motif; that stretch reads RGLRSLADNQSTESSEGR. 2 disordered regions span residues 29-53 and 135-176; these read RGLR…YNHH and ATPA…NLAG. A glycan (N-linked (GlcNAc...) asparagine) is linked at N37. The span at 135-146 shows a compositional bias: low complexity; that stretch reads ATPAPTTSVPSS. A compositionally biased stretch (polar residues) spans 147 to 163; that stretch reads LVNTDTSDNQLPTTPVA. A compositionally biased stretch (gly residues) spans 166–176; the sequence is QGGGIGSNLAG. The N-linked (GlcNAc...) asparagine glycan is linked to N217.

This sequence belongs to the RxLR effector family.

The protein resides in the secreted. It is found in the host cell membrane. Functionally, secreted effector that completely suppresses the host cell death induced by cell death-inducing proteins. The protein is Secreted RxLR effector protein 90 of Plasmopara viticola (Downy mildew of grapevine).